Consider the following 55-residue polypeptide: Large ribosomal subunit protein bL33 (55 aa).

The protein belongs to the bacterial ribosomal protein bL33 family.

The polypeptide is Large ribosomal subunit protein bL33 (Allorhizobium ampelinum (strain ATCC BAA-846 / DSM 112012 / S4) (Agrobacterium vitis (strain S4))).